Consider the following 273-residue polypeptide: 1,4-dihydroxy-2-naphthoyl-CoA synthase (273 aa).

Substrate is bound by residues arginine 34, 73–77 (SGGDQ), tyrosine 85, 117–121 (YAVGG), threonine 143, serine 149, tyrosine 246, and lysine 261. Residue 142 to 144 (QTG) coordinates hydrogencarbonate. Over residues 254–265 (GRDAFKEKRDPD) the composition is skewed to basic and acidic residues. A disordered region spans residues 254–273 (GRDAFKEKRDPDFDQFPKFP).

Belongs to the enoyl-CoA hydratase/isomerase family. MenB subfamily. Hydrogencarbonate serves as cofactor.

It catalyses the reaction 2-succinylbenzoyl-CoA + H(+) = 1,4-dihydroxy-2-naphthoyl-CoA + H2O. The protein operates within quinol/quinone metabolism; 1,4-dihydroxy-2-naphthoate biosynthesis; 1,4-dihydroxy-2-naphthoate from chorismate: step 6/7. It functions in the pathway quinol/quinone metabolism; menaquinone biosynthesis. Converts o-succinylbenzoyl-CoA (OSB-CoA) to 1,4-dihydroxy-2-naphthoyl-CoA (DHNA-CoA). This chain is 1,4-dihydroxy-2-naphthoyl-CoA synthase, found in Staphylococcus aureus (strain Mu50 / ATCC 700699).